The sequence spans 368 residues: Probable dual-specificity RNA methyltransferase RlmN (368 aa).

Glu108 acts as the Proton acceptor in catalysis. The 232-residue stretch at 114–345 (HAYGNSVCVS…VTVRRGLGAD (232 aa)) folds into the Radical SAM core domain. Cys121 and Cys350 are oxidised to a cystine. Positions 128, 132, and 135 each coordinate [4Fe-4S] cluster. Residues 175-176 (GE), Ser207, 230-232 (SLH), and Asn307 each bind S-adenosyl-L-methionine. The active-site S-methylcysteine intermediate is Cys350.

This sequence belongs to the radical SAM superfamily. RlmN family. The cofactor is [4Fe-4S] cluster.

The protein localises to the cytoplasm. The catalysed reaction is adenosine(2503) in 23S rRNA + 2 reduced [2Fe-2S]-[ferredoxin] + 2 S-adenosyl-L-methionine = 2-methyladenosine(2503) in 23S rRNA + 5'-deoxyadenosine + L-methionine + 2 oxidized [2Fe-2S]-[ferredoxin] + S-adenosyl-L-homocysteine. The enzyme catalyses adenosine(37) in tRNA + 2 reduced [2Fe-2S]-[ferredoxin] + 2 S-adenosyl-L-methionine = 2-methyladenosine(37) in tRNA + 5'-deoxyadenosine + L-methionine + 2 oxidized [2Fe-2S]-[ferredoxin] + S-adenosyl-L-homocysteine. In terms of biological role, specifically methylates position 2 of adenine 2503 in 23S rRNA and position 2 of adenine 37 in tRNAs. The sequence is that of Probable dual-specificity RNA methyltransferase RlmN from Pelotomaculum thermopropionicum (strain DSM 13744 / JCM 10971 / SI).